Consider the following 125-residue polypeptide: Large ribosomal subunit protein uL22 (125 aa).

This sequence belongs to the universal ribosomal protein uL22 family. As to quaternary structure, part of the 50S ribosomal subunit.

Its function is as follows. This protein binds specifically to 23S rRNA; its binding is stimulated by other ribosomal proteins, e.g. L4, L17, and L20. It is important during the early stages of 50S assembly. It makes multiple contacts with different domains of the 23S rRNA in the assembled 50S subunit and ribosome. The globular domain of the protein is located near the polypeptide exit tunnel on the outside of the subunit, while an extended beta-hairpin is found that lines the wall of the exit tunnel in the center of the 70S ribosome. This is Large ribosomal subunit protein uL22 from Thermobifida fusca (strain YX).